The sequence spans 512 residues: Maturase K (512 aa).

It belongs to the intron maturase 2 family. MatK subfamily.

The protein resides in the plastid. The protein localises to the chloroplast. Usually encoded in the trnK tRNA gene intron. Probably assists in splicing its own and other chloroplast group II introns. The chain is Maturase K from Dalea wrightii (Wright's prairie clover).